The primary structure comprises 356 residues: Tyrosine recombinase XerS (356 aa).

Residues 16–121 form the Core-binding (CB) domain; sequence IMPWYVLDYY…ALSSLYKYLT (106 aa). A Tyr recombinase domain is found at 169–354; sequence AFLDYVDKEY…VNDEQKNALD (186 aa). Active-site residues include arginine 210, lysine 234, histidine 306, arginine 309, and histidine 332. Tyrosine 341 acts as the O-(3'-phospho-DNA)-tyrosine intermediate in catalysis.

It belongs to the 'phage' integrase family. XerS subfamily.

The protein resides in the cytoplasm. Its activity is regulated as follows. FtsK is required for recombination. Its function is as follows. Site-specific tyrosine recombinase, which acts by catalyzing the cutting and rejoining of the recombining DNA molecules. Essential to convert dimers of the bacterial chromosome into monomers to permit their segregation at cell division. The chain is Tyrosine recombinase XerS from Streptococcus equi subsp. zooepidemicus (strain MGCS10565).